The primary structure comprises 86 residues: Putative antitoxin VapB36 (86 aa).

In terms of biological role, possibly the antitoxin component of a type II toxin-antitoxin (TA) system. Its cognate toxin is VapC36 (Potential). This is Putative antitoxin VapB36 (vapB36) from Mycobacterium tuberculosis (strain CDC 1551 / Oshkosh).